We begin with the raw amino-acid sequence, 640 residues long: 1-deoxy-D-xylulose-5-phosphate synthase (640 aa).

Residues H79 and 120–122 (GHS) contribute to the thiamine diphosphate site. D151 contacts Mg(2+). Residues 152–153 (GS), N180, Y290, and E372 contribute to the thiamine diphosphate site. N180 contributes to the Mg(2+) binding site.

It belongs to the transketolase family. DXPS subfamily. Homodimer. The cofactor is Mg(2+). Thiamine diphosphate is required as a cofactor.

The enzyme catalyses D-glyceraldehyde 3-phosphate + pyruvate + H(+) = 1-deoxy-D-xylulose 5-phosphate + CO2. The protein operates within metabolic intermediate biosynthesis; 1-deoxy-D-xylulose 5-phosphate biosynthesis; 1-deoxy-D-xylulose 5-phosphate from D-glyceraldehyde 3-phosphate and pyruvate: step 1/1. Catalyzes the acyloin condensation reaction between C atoms 2 and 3 of pyruvate and glyceraldehyde 3-phosphate to yield 1-deoxy-D-xylulose-5-phosphate (DXP). This is 1-deoxy-D-xylulose-5-phosphate synthase from Rhodopseudomonas palustris (strain BisA53).